The sequence spans 462 residues: Serine--tRNA ligase, cytoplasmic (462 aa).

Lys-241 is covalently cross-linked (Glycyl lysine isopeptide (Lys-Gly) (interchain with G-Cter in URM1)). Thr-246–Glu-248 lines the L-serine pocket. Residues Arg-279–Glu-281 and Val-295 each bind ATP. Glu-302 lines the L-serine pocket. Residues Lys-350 and Lys-351 each participate in a glycyl lysine isopeptide (Lys-Gly) (interchain with G-Cter in URM1) cross-link. Glu-366–Ser-369 provides a ligand contact to ATP. Cys-373 and Cys-400 each carry cysteine persulfide. Position 404 (Thr-404) interacts with L-serine.

The protein belongs to the class-II aminoacyl-tRNA synthetase family. Type-1 seryl-tRNA synthetase subfamily. As to quaternary structure, homodimer; the tRNA molecule probably binds across the dimer. Interacts with ABP140; interaction is required for the tRNA N(3)-methylcytidine methyltransferase activity of ABP140. In terms of processing, conjugated to URM1, a ubiquitin-like protein, in response to oxidative stresses. The attachment of URM1 to lysine residues exclusively depends on the presence of a peroxidatic cysteine in the target protein, with low specificity for the particular residue, motif, or structural context at which urmylation can occur. The URM1-conjugation reaction is mechanistically and directly coupled to the process of cysteine persulfidation, transfering the sulfur atom of the URM1 thiocarboxyl group to redox-active cysteine residues in the target protein if it is exposed to oxidative conditions. Post-translationally, persulfidated on specific redox-active cysteine residues. Persulfidation (also called protein S-sulfhydration) may provide a molecular mechanism that enables cells to protect vulnerable cysteine residues from reactive oxygen species (ROS) under stress conditions.

Its subcellular location is the cytoplasm. The protein resides in the cytosol. The catalysed reaction is tRNA(Ser) + L-serine + ATP = L-seryl-tRNA(Ser) + AMP + diphosphate + H(+). Functionally, catalyzes the attachment of serine to tRNA(Ser) in a two-step reaction: serine is first activated by ATP to form Ser-AMP and then transferred to the acceptor end of tRNA(Ser). The sequence is that of Serine--tRNA ligase, cytoplasmic (SES1) from Saccharomyces cerevisiae (strain ATCC 204508 / S288c) (Baker's yeast).